The chain runs to 187 residues: MESFIASIRLVAATMLICVAGYSAAVWAVGQVLMPGSAQGSLIAAADGKVIGSSQVAQNFTEPRYFWPRPSAVDYNGAGAGGSNKSPTSTDIADRARETVARYGATAENPLPAELAAASGAGLDPHISERGALYQAARVAQARGLPQAGVEALIHEHAFAPGAFLAPDRLVNVLELNLALDRVETAG.

A helical transmembrane segment spans residues 10–30; the sequence is LVAATMLICVAGYSAAVWAVG.

It belongs to the KdpC family. In terms of assembly, the system is composed of three essential subunits: KdpA, KdpB and KdpC.

It is found in the cell inner membrane. Part of the high-affinity ATP-driven potassium transport (or Kdp) system, which catalyzes the hydrolysis of ATP coupled with the electrogenic transport of potassium into the cytoplasm. This subunit acts as a catalytic chaperone that increases the ATP-binding affinity of the ATP-hydrolyzing subunit KdpB by the formation of a transient KdpB/KdpC/ATP ternary complex. The chain is Potassium-transporting ATPase KdpC subunit from Parvibaculum lavamentivorans (strain DS-1 / DSM 13023 / NCIMB 13966).